Reading from the N-terminus, the 572-residue chain is Phosphoenolpyruvate-protein phosphotransferase (572 aa).

Residue His-190 is the Tele-phosphohistidine intermediate of the active site. Positions 297 and 333 each coordinate phosphoenolpyruvate. Mg(2+) is bound by residues Glu-427 and Asp-451. Phosphoenolpyruvate-binding positions include 450-451 and Arg-461; that span reads ND. Cys-498 serves as the catalytic Proton donor.

Belongs to the PEP-utilizing enzyme family. Homodimer. It depends on Mg(2+) as a cofactor.

It is found in the cytoplasm. The enzyme catalyses L-histidyl-[protein] + phosphoenolpyruvate = N(pros)-phospho-L-histidyl-[protein] + pyruvate. Functionally, general (non sugar-specific) component of the phosphoenolpyruvate-dependent sugar phosphotransferase system (sugar PTS). This major carbohydrate active-transport system catalyzes the phosphorylation of incoming sugar substrates concomitantly with their translocation across the cell membrane. Enzyme I transfers the phosphoryl group from phosphoenolpyruvate (PEP) to the phosphoryl carrier protein (HPr). The polypeptide is Phosphoenolpyruvate-protein phosphotransferase (ptsI) (Mycoplasma genitalium (strain ATCC 33530 / DSM 19775 / NCTC 10195 / G37) (Mycoplasmoides genitalium)).